A 438-amino-acid polypeptide reads, in one-letter code: DNA primase small subunit (438 aa).

Catalysis depends on residues Glu-63, Asp-127, and Asp-129. The Zinc knuckle motif signature appears at 139-149 (CCSGAGVCLKC).

It belongs to the eukaryotic-type primase small subunit family. As to quaternary structure, heterodimer of a catalytic subunit Prim1 and a regulatory subunit Prim2, also known as the DNA primase complex. Component of the alpha DNA polymerase complex (also known as the alpha DNA polymerase-primase complex) consisting of four subunits: the catalytic subunit PolA1, the regulatory subunit PolA2, and the primase complex subunits Prim1 and Prim2 respectively. PolA1 associates with the DNA primase complex before association with PolA2. It depends on Mg(2+) as a cofactor. Mn(2+) serves as cofactor. Expressed in embryos (at protein level).

Its activity is regulated as follows. The presence of the regulatory subunit Prim2 accelerates the kinetics of initiation and primer extension. Its function is as follows. Catalytic subunit of the DNA primase complex and component of the DNA polymerase alpha complex (also known as the alpha DNA polymerase-primase complex) which play an essential role in the initiation of DNA synthesis. During the S phase of the cell cycle, the DNA polymerase alpha complex (composed of a catalytic subunit PolA1, an accessory subunit PolA2 and two primase subunits, the catalytic subunit Prim1 and the regulatory subunit Prim2) is recruited to DNA at the replicative forks. The primase subunit of the polymerase alpha complex initiates DNA synthesis by oligomerising short RNA primers on both leading and lagging strands. These primers are initially extended by the polymerase alpha catalytic subunit and subsequently transferred to polymerase delta and polymerase epsilon for processive synthesis on the lagging and leading strand, respectively. In the primase complex, both subunits are necessary for the initial di-nucleotide formation, but the extension of the primer depends only on the catalytic subunit. Can add both ribo- and deoxynucleotides during elongation of the primers. Binds single stranded DNA. This Drosophila melanogaster (Fruit fly) protein is DNA primase small subunit.